The following is a 426-amino-acid chain: Serine hydroxymethyltransferase (426 aa).

Residues Leu115 and 119–121 each bind (6S)-5,6,7,8-tetrahydrofolate; that span reads GHI. Lys225 is subject to N6-(pyridoxal phosphate)lysine.

It belongs to the SHMT family. In terms of assembly, homodimer. Pyridoxal 5'-phosphate is required as a cofactor.

The protein resides in the cytoplasm. It participates in amino-acid biosynthesis; glycine biosynthesis; glycine from L-serine: step 1/1. Catalyzes the reversible interconversion of serine and glycine with a modified folate serving as the one-carbon carrier. Also exhibits a pteridine-independent aldolase activity toward beta-hydroxyamino acids, producing glycine and aldehydes, via a retro-aldol mechanism. This Thermoplasma volcanium (strain ATCC 51530 / DSM 4299 / JCM 9571 / NBRC 15438 / GSS1) protein is Serine hydroxymethyltransferase.